A 226-amino-acid chain; its full sequence is dITP/XTP pyrophosphatase (226 aa).

14 to 19 (TGNKDK) contributes to the substrate binding site. Glutamate 49 and aspartate 83 together coordinate Mg(2+). Aspartate 83 functions as the Proton acceptor in the catalytic mechanism. Residues threonine 84, 176–179 (FGYD), lysine 199, and 204–205 (HR) contribute to the substrate site.

It belongs to the HAM1 NTPase family. As to quaternary structure, homodimer. It depends on Mg(2+) as a cofactor.

The enzyme catalyses XTP + H2O = XMP + diphosphate + H(+). The catalysed reaction is dITP + H2O = dIMP + diphosphate + H(+). It carries out the reaction ITP + H2O = IMP + diphosphate + H(+). Pyrophosphatase that catalyzes the hydrolysis of nucleoside triphosphates to their monophosphate derivatives, with a high preference for the non-canonical purine nucleotides XTP (xanthosine triphosphate), dITP (deoxyinosine triphosphate) and ITP. Seems to function as a house-cleaning enzyme that removes non-canonical purine nucleotides from the nucleotide pool, thus preventing their incorporation into DNA/RNA and avoiding chromosomal lesions. This Chlorobaculum tepidum (strain ATCC 49652 / DSM 12025 / NBRC 103806 / TLS) (Chlorobium tepidum) protein is dITP/XTP pyrophosphatase.